Reading from the N-terminus, the 386-residue chain is Acetylornithine aminotransferase (386 aa).

Pyridoxal 5'-phosphate contacts are provided by residues 94-95 and phenylalanine 121; that span reads GT. Arginine 124 is a N(2)-acetyl-L-ornithine binding site. 206-209 contributes to the pyridoxal 5'-phosphate binding site; the sequence is DEVQ. Lysine 235 is modified (N6-(pyridoxal phosphate)lysine). Residue serine 263 coordinates N(2)-acetyl-L-ornithine. Residue threonine 264 coordinates pyridoxal 5'-phosphate.

This sequence belongs to the class-III pyridoxal-phosphate-dependent aminotransferase family. ArgD subfamily. Homodimer. Requires pyridoxal 5'-phosphate as cofactor.

The protein localises to the cytoplasm. The catalysed reaction is N(2)-acetyl-L-ornithine + 2-oxoglutarate = N-acetyl-L-glutamate 5-semialdehyde + L-glutamate. It participates in amino-acid biosynthesis; L-arginine biosynthesis; N(2)-acetyl-L-ornithine from L-glutamate: step 4/4. The polypeptide is Acetylornithine aminotransferase (Listeria monocytogenes serotype 4b (strain F2365)).